The primary structure comprises 1403 residues: DNA-directed RNA polymerase subunit beta' (1403 aa).

Positions 71, 73, 86, and 89 each coordinate Zn(2+). Residues Asp462, Asp464, and Asp466 each coordinate Mg(2+). The Zn(2+) site is built by Cys811, Cys885, Cys892, and Cys895.

Belongs to the RNA polymerase beta' chain family. In terms of assembly, the RNAP catalytic core consists of 2 alpha, 1 beta, 1 beta' and 1 omega subunit. When a sigma factor is associated with the core the holoenzyme is formed, which can initiate transcription. Mg(2+) is required as a cofactor. It depends on Zn(2+) as a cofactor.

It carries out the reaction RNA(n) + a ribonucleoside 5'-triphosphate = RNA(n+1) + diphosphate. DNA-dependent RNA polymerase catalyzes the transcription of DNA into RNA using the four ribonucleoside triphosphates as substrates. The chain is DNA-directed RNA polymerase subunit beta' from Bartonella bacilliformis (strain ATCC 35685 / KC583 / Herrer 020/F12,63).